Consider the following 295-residue polypeptide: Delta-1-pyrroline-5-carboxylate reductase apf3 (295 aa).

This sequence belongs to the pyrroline-5-carboxylate reductase family.

Its pathway is secondary metabolite biosynthesis. Delta-1-pyrroline-5-carboxylate reductase; part of the gene cluster that mediates the biosynthesis of the cyclic tetrapeptide apicidin F (APF). The non-ribosomal peptide synthetase apf1 incorporates four different amino acids to produce apicidin F: L-phenylalanine, D-pipecolic acid (D-pip), N-methoxy-L-tryptophan and L-2-aminooctanedioic acid. L-Phenylalanine is the only proteinogenic amino acid directly used by apf1. The 3 other apf1 substrates are non-proteinogenic and have to be modified by other enzymes of the cluster. Lysine is converted to delta-1-pyrroline-5-carboxylate (P5C) which is reduced to L-pipecolic acid (L-pip) by apf3. L-pip is epimerized to D-pip, probably by apf1 activity, prior to incorporation. L-Tryptophan is N-oxidyzed by one of the cytochrome P450 monooxygenases (apf7 or apf8), and further methylated at the hydroxy group by the O-methyltransferase apf6 to yield N-methoxy-L-tryptophan. The synthesis of the fourth apf1 substrate is more complex. The fatty acid synthase apf5 is involved in the synthesis of the octanoic acid backbone of L-2-aminooctanedioic acid by fixing one acetyl-CoA unit and three malonyl-CoA units. Then one of the cytochrome P450 monooxygenases (apf7 or apf8) may oxidize this backbone to 2-oxooctanoic acid. The aminotransferase apf4 is predicted to catalyze the exchange of the keto group with an amino group. The next step would be the oxidation of 2-aminooctanoic acid by one of the cytochrome P450 monooxygenases (apf7 or apf8). The last step is the oxidation of 2-amino-8-hydroxyoctanoic acid to 2-aminooctanedioic acid is catalyzed by the FAD-dependent monooxygenase apf9. This Gibberella fujikuroi (strain CBS 195.34 / IMI 58289 / NRRL A-6831) (Bakanae and foot rot disease fungus) protein is Delta-1-pyrroline-5-carboxylate reductase apf3.